Consider the following 423-residue polypeptide: Imidazolonepropionase (423 aa).

2 residues coordinate Fe(3+): His80 and His82. Zn(2+) contacts are provided by His80 and His82. 4-imidazolone-5-propanoate-binding residues include Arg89, Tyr152, and His185. Tyr152 is a binding site for N-formimidoyl-L-glutamate. His250 lines the Fe(3+) pocket. A Zn(2+)-binding site is contributed by His250. Residue Gln253 coordinates 4-imidazolone-5-propanoate. Asp325 serves as a coordination point for Fe(3+). Asp325 provides a ligand contact to Zn(2+). Asn327 and Gly329 together coordinate N-formimidoyl-L-glutamate. Position 330 (Thr330) interacts with 4-imidazolone-5-propanoate.

Belongs to the metallo-dependent hydrolases superfamily. HutI family. Zn(2+) serves as cofactor. The cofactor is Fe(3+).

The protein localises to the cytoplasm. It catalyses the reaction 4-imidazolone-5-propanoate + H2O = N-formimidoyl-L-glutamate. The protein operates within amino-acid degradation; L-histidine degradation into L-glutamate; N-formimidoyl-L-glutamate from L-histidine: step 3/3. Its function is as follows. Catalyzes the hydrolytic cleavage of the carbon-nitrogen bond in imidazolone-5-propanoate to yield N-formimidoyl-L-glutamate. It is the third step in the universal histidine degradation pathway. In Cupriavidus pinatubonensis (strain JMP 134 / LMG 1197) (Cupriavidus necator (strain JMP 134)), this protein is Imidazolonepropionase.